We begin with the raw amino-acid sequence, 475 residues long: Trifunctional enzyme subunit beta, mitochondrial (475 aa).

A mitochondrion-targeting transit peptide spans 1–34 (MTTILTSTFRNLSTTSKWALRFSVRPLSCSSQVQ). Position 53 is an N6-succinyllysine (Lys53). Lys73 carries the N6-acetyllysine; alternate modification. Lys73 bears the N6-succinyllysine; alternate mark. The Acyl-thioester intermediate role is filled by Cys139. An intramembrane segment occupies 174-221 (IRHSRNMRKMMLDLNKAKTLAQRLSLLTKFRLNFLSPELPAVAEFSTN). N6-acetyllysine; alternate is present on Lys189. Lys189 is subject to N6-succinyllysine; alternate. An N6-succinyllysine mark is found at Lys191, Lys273, and Lys292. Lys294 is subject to N6-acetyllysine; alternate. Residue Lys294 is modified to N6-succinyllysine; alternate. The residue at position 299 (Lys299) is an N6-acetyllysine. The residue at position 333 (Lys333) is an N6-acetyllysine; alternate. The residue at position 333 (Lys333) is an N6-succinyllysine; alternate. 2 positions are modified to N6-acetyllysine: Lys349 and Lys362. Cys459 functions as the Proton donor/acceptor in the catalytic mechanism.

It belongs to the thiolase-like superfamily. Thiolase family. In terms of assembly, heterotetramer of 2 alpha/HADHA and 2 beta/HADHB subunits; forms the mitochondrial trifunctional enzyme. Also purified as higher order heterooligomers including a 4 alpha/HADHA and 4 beta/HADHB heterooligomer which physiological significance remains unclear. The mitochondrial trifunctional enzyme interacts with MTLN. Interacts with RSAD2/viperin.

Its subcellular location is the mitochondrion. The protein resides in the mitochondrion inner membrane. The protein localises to the mitochondrion outer membrane. It is found in the endoplasmic reticulum. The catalysed reaction is an acyl-CoA + acetyl-CoA = a 3-oxoacyl-CoA + CoA. It carries out the reaction butanoyl-CoA + acetyl-CoA = 3-oxohexanoyl-CoA + CoA. The enzyme catalyses hexanoyl-CoA + acetyl-CoA = 3-oxooctanoyl-CoA + CoA. It catalyses the reaction octanoyl-CoA + acetyl-CoA = 3-oxodecanoyl-CoA + CoA. The catalysed reaction is decanoyl-CoA + acetyl-CoA = 3-oxododecanoyl-CoA + CoA. It carries out the reaction dodecanoyl-CoA + acetyl-CoA = 3-oxotetradecanoyl-CoA + CoA. The enzyme catalyses tetradecanoyl-CoA + acetyl-CoA = 3-oxohexadecanoyl-CoA + CoA. The protein operates within lipid metabolism; fatty acid beta-oxidation. Its function is as follows. Mitochondrial trifunctional enzyme catalyzes the last three of the four reactions of the mitochondrial beta-oxidation pathway. The mitochondrial beta-oxidation pathway is the major energy-producing process in tissues and is performed through four consecutive reactions breaking down fatty acids into acetyl-CoA. Among the enzymes involved in this pathway, the trifunctional enzyme exhibits specificity for long-chain fatty acids. Mitochondrial trifunctional enzyme is a heterotetrameric complex composed of two proteins, the trifunctional enzyme subunit alpha/HADHA carries the 2,3-enoyl-CoA hydratase and the 3-hydroxyacyl-CoA dehydrogenase activities, while the trifunctional enzyme subunit beta/HADHB described here bears the 3-ketoacyl-CoA thiolase activity. This Rattus norvegicus (Rat) protein is Trifunctional enzyme subunit beta, mitochondrial (Hadhb).